The primary structure comprises 225 residues: ATP-dependent Clp protease proteolytic subunit (225 aa).

Residue Ser123 is the Nucleophile of the active site. Residue His148 is part of the active site.

Belongs to the peptidase S14 family. As to quaternary structure, fourteen ClpP subunits assemble into 2 heptameric rings which stack back to back to give a disk-like structure with a central cavity, resembling the structure of eukaryotic proteasomes.

The protein resides in the cytoplasm. It catalyses the reaction Hydrolysis of proteins to small peptides in the presence of ATP and magnesium. alpha-casein is the usual test substrate. In the absence of ATP, only oligopeptides shorter than five residues are hydrolyzed (such as succinyl-Leu-Tyr-|-NHMec, and Leu-Tyr-Leu-|-Tyr-Trp, in which cleavage of the -Tyr-|-Leu- and -Tyr-|-Trp bonds also occurs).. Functionally, cleaves peptides in various proteins in a process that requires ATP hydrolysis. Has a chymotrypsin-like activity. Plays a major role in the degradation of misfolded proteins. In Chlorobium phaeovibrioides (strain DSM 265 / 1930) (Prosthecochloris vibrioformis (strain DSM 265)), this protein is ATP-dependent Clp protease proteolytic subunit.